The chain runs to 186 residues: UPF0200 protein PF1294 (186 aa).

ATP is bound at residue 7–14 (GMPGSGKG).

This sequence belongs to the UPF0200 family.

The protein is UPF0200 protein PF1294 of Pyrococcus furiosus (strain ATCC 43587 / DSM 3638 / JCM 8422 / Vc1).